We begin with the raw amino-acid sequence, 115 residues long: Large ribosomal subunit protein bL20 (115 aa).

Belongs to the bacterial ribosomal protein bL20 family.

Binds directly to 23S ribosomal RNA and is necessary for the in vitro assembly process of the 50S ribosomal subunit. It is not involved in the protein synthesizing functions of that subunit. The sequence is that of Large ribosomal subunit protein bL20 from Salinibacter ruber (strain DSM 13855 / M31).